The primary structure comprises 146 residues: Large ribosomal subunit protein uL15 (146 aa).

Residues Met-1–Pro-65 form a disordered region. The segment covering Arg-24–Ala-34 has biased composition (gly residues).

It belongs to the universal ribosomal protein uL15 family. Part of the 50S ribosomal subunit.

Functionally, binds to the 23S rRNA. This is Large ribosomal subunit protein uL15 from Bordetella parapertussis (strain 12822 / ATCC BAA-587 / NCTC 13253).